A 295-amino-acid polypeptide reads, in one-letter code: Sulfotransferase 1A1 (295 aa).

A 3'-phosphoadenylyl sulfate-binding site is contributed by 48–53 (KSGTTW). 106–108 (KTH) lines the substrate pocket. The active-site Proton acceptor is His-108. 3'-phosphoadenylyl sulfate-binding positions include Arg-130, Ser-138, Tyr-193, 227–232 (TSFKEM), and 255–259 (FMRKG). A Phosphoserine modification is found at Ser-138.

Belongs to the sulfotransferase 1 family. Homodimer. Ubiquitously expressed in canine tissues with highest expression in male and female liver.

Its subcellular location is the cytoplasm. The catalysed reaction is a phenol + 3'-phosphoadenylyl sulfate = an aryl sulfate + adenosine 3',5'-bisphosphate + H(+). The enzyme catalyses 17beta-estradiol + 3'-phosphoadenylyl sulfate = 17beta-estradiol 3-sulfate + adenosine 3',5'-bisphosphate + H(+). It catalyses the reaction 4-ethylphenol + 3'-phosphoadenylyl sulfate = 4-ethylphenyl sulfate + adenosine 3',5'-bisphosphate + H(+). It carries out the reaction 4-nitrophenol + 3'-phosphoadenylyl sulfate = 4-nitrophenyl sulfate + adenosine 3',5'-bisphosphate. The catalysed reaction is dopamine + 3'-phosphoadenylyl sulfate = dopamine 3-O-sulfate + adenosine 3',5'-bisphosphate + H(+). The enzyme catalyses dopamine + 3'-phosphoadenylyl sulfate = dopamine 4-O-sulfate + adenosine 3',5'-bisphosphate + H(+). It catalyses the reaction 3,3',5-triiodo-L-thyronine + 3'-phosphoadenylyl sulfate = 3,3',5-triiodo-L-thyronine sulfate + adenosine 3',5'-bisphosphate + H(+). It carries out the reaction 3,3',5'-triiodo-L-thyronine + 3'-phosphoadenylyl sulfate = 3,3',5'-triiodo-L-thyronine sulfate + adenosine 3',5'-bisphosphate + H(+). The catalysed reaction is 3,3'-diiodo-L-thyronine + 3'-phosphoadenylyl sulfate = 3,3'-diiodo-L-thyronine sulfate + adenosine 3',5'-bisphosphate + H(+). The enzyme catalyses L-thyroxine + 3'-phosphoadenylyl sulfate = L-thyroxine sulfate + adenosine 3',5'-bisphosphate + H(+). Its function is as follows. Sulfotransferase that utilizes 3'-phospho-5'-adenylyl sulfate (PAPS) as sulfonate donor to catalyze the sulfate conjugation of a wide variety of acceptor molecules bearing a hydroxyl or an amine group. Sulfonation increases the water solubility of most compounds, and therefore their renal excretion, but it can also result in bioactivation to form active metabolites. Displays broad substrate specificity for small phenolic compounds. Plays an important role in the sulfonation of endogenous molecules such as steroid hormones. Mediates also the metabolic activation of carcinogenic N-hydroxyarylamines leading to highly reactive intermediates capable of forming DNA adducts, potentially resulting in mutagenesis. May play a role in gut microbiota-host metabolic interaction. O-sulfonates 4-ethylphenol (4-EP), a dietary tyrosine-derived metabolite produced by gut bacteria. The product 4-EPS crosses the blood-brain barrier and may negatively regulate oligodendrocyte maturation and myelination, affecting the functional connectivity of different brain regions associated with the limbic system. Catalyzes the sulfate conjugation of dopamine. Catalyzes the sulfation of T4 (L-thyroxine/3,5,3',5'-tetraiodothyronine), T3 (3,5,3'-triiodothyronine), rT3 (3,3',5'-triiodothyronine) and 3,3'-T2 (3,3'-diiodothyronine), with a substrate preference of 3,3'-T2 &gt; rT3 &gt; T3 &gt; T4. The polypeptide is Sulfotransferase 1A1 (SULT1A1) (Canis lupus familiaris (Dog)).